Reading from the N-terminus, the 177-residue chain is Large ribosomal subunit protein uL6 (177 aa).

This sequence belongs to the universal ribosomal protein uL6 family. As to quaternary structure, part of the 50S ribosomal subunit.

Functionally, this protein binds to the 23S rRNA, and is important in its secondary structure. It is located near the subunit interface in the base of the L7/L12 stalk, and near the tRNA binding site of the peptidyltransferase center. This Rickettsia canadensis (strain McKiel) protein is Large ribosomal subunit protein uL6.